A 921-amino-acid polypeptide reads, in one-letter code: Inner nuclear membrane protein Man1 (921 aa).

The region spanning 7-51 (AAAPQQLSDEELFSQLRRYGLSPGPVTESTRPVYLKKLKKLREEE) is the LEM domain. Ser28 carries the phosphoserine modification. 3 disordered regions span residues 47-97 (LREE…AYLR), 136-357 (SSDE…GGCG), and 374-395 (LAPL…PTGP). 2 stretches are compositionally biased toward low complexity: residues 53–62 (QQQQQQQQQQ) and 72–85 (TRNS…TAMG). Residues Ser136, Ser137, and Ser140 each carry the phosphoserine modification. Residues 217-237 (AAEDADEELADGEDRDPEAEE) are compositionally biased toward acidic residues. Ser261, Ser263, and Ser287 each carry phosphoserine. The segment covering 263-275 (SEEEEEEGEEDGD) has biased composition (acidic residues). A compositionally biased stretch (polar residues) spans 308 to 317 (SGGSRQETSV). Gly residues predominate over residues 348–357 (PGGGGGGGCG). Residue Ser412 is modified to Phosphoserine. The next 2 helical transmembrane spans lie at 486–506 (MFLL…YLGM) and 637–657 (AFIT…LVCV). An interaction with SMAD1, SMAD2, SMAD3 and SMAD5 region spans residues 709–921 (VRDSLIQPQD…TGLANSQGSS (213 aa)). Residues 717-736 (QDRKKMKKVWDRAVDFLAAN) mediate DNA binding. Residue Ser787 is modified to Phosphoserine. At Thr893 the chain carries Phosphothreonine. Residue Ser921 is modified to Phosphoserine.

As to quaternary structure, interacts with SMAD1, SMAD2, SMAD3 and SMAD5. Binds to both phosphorylated and unphosphorylated R-SMADS.

The protein resides in the nucleus inner membrane. Can function as a specific repressor of TGF-beta, activin, and BMP signaling through its interaction with the R-SMAD proteins. Antagonizes TGF-beta-induced cell proliferation arrest. In Mus musculus (Mouse), this protein is Inner nuclear membrane protein Man1 (Lemd3).